The following is a 24-amino-acid chain: Frenatin-4 (24 aa).

In terms of tissue distribution, expressed by the skin glands.

It is found in the secreted. Its function is as follows. Very weak antimicrobial peptide since it does not show activity below 100 ug/ml against Bacillus cereus, Escherichia coli, Leuconostoc mesenteroides, Micrococcus luteus, Pastewella haemolytica, Staphylococcus aureus, Streptococcus faecalis and Streptococcus uberis. The protein is Frenatin-4 of Nyctimystes infrafrenatus (White-lipped tree frog).